We begin with the raw amino-acid sequence, 65 residues long: Large ribosomal subunit protein bL35 (65 aa).

Residues 1 to 52 (MPKIKTNRGAAKRFKRTGSGGFKCVQSHRRHILTKKSTKRKRQLRSPDMVHP) are disordered. Positions 26–44 (QSHRRHILTKKSTKRKRQL) are enriched in basic residues.

The protein belongs to the bacterial ribosomal protein bL35 family.

The polypeptide is Large ribosomal subunit protein bL35 (Methylococcus capsulatus (strain ATCC 33009 / NCIMB 11132 / Bath)).